The sequence spans 199 residues: dITP/XTP pyrophosphatase (199 aa).

Threonine 8–lysine 13 provides a ligand contact to substrate. Residue aspartate 68 is the Proton acceptor of the active site. Aspartate 68 provides a ligand contact to Mg(2+). Substrate is bound by residues serine 69, phenylalanine 155–aspartate 158, lysine 177, and histidine 182–arginine 183.

This sequence belongs to the HAM1 NTPase family. As to quaternary structure, homodimer. Mg(2+) serves as cofactor.

The enzyme catalyses XTP + H2O = XMP + diphosphate + H(+). It catalyses the reaction dITP + H2O = dIMP + diphosphate + H(+). It carries out the reaction ITP + H2O = IMP + diphosphate + H(+). Pyrophosphatase that catalyzes the hydrolysis of nucleoside triphosphates to their monophosphate derivatives, with a high preference for the non-canonical purine nucleotides XTP (xanthosine triphosphate), dITP (deoxyinosine triphosphate) and ITP. Seems to function as a house-cleaning enzyme that removes non-canonical purine nucleotides from the nucleotide pool, thus preventing their incorporation into DNA/RNA and avoiding chromosomal lesions. This chain is dITP/XTP pyrophosphatase, found in Borrelia duttonii (strain Ly).